We begin with the raw amino-acid sequence, 351 residues long: Columbamine O-methyltransferase (351 aa).

S-adenosyl-L-methionine contacts are provided by glycine 198, aspartate 221, aspartate 241, methionine 242, and lysine 255. Histidine 259 (proton acceptor) is an active-site residue.

It belongs to the class I-like SAM-binding methyltransferase superfamily. Cation-independent O-methyltransferase family. COMT subfamily. Homodimer.

The enzyme catalyses columbamine + S-adenosyl-L-methionine = palmatine + S-adenosyl-L-homocysteine + H(+). The catalysed reaction is (S)-tetrahydrocolumbamine + S-adenosyl-L-methionine = (S)-tetrahydropalmatine + S-adenosyl-L-homocysteine + H(+). It participates in alkaloid biosynthesis; palmatine biosynthesis; palmatine from columbamine: step 1/1. Functionally, catalyzes the conversion of tetrahydrocolumbamine to (S)-tetrahydropalmatine and of columbamine to palmatine, an isoquinoline alkaloid. The chain is Columbamine O-methyltransferase from Coptis japonica (Japanese goldthread).